Reading from the N-terminus, the 181-residue chain is MIQPLFLVGPRGCGKTTVGKALADALERRFVDTDQWLQANVQMTVADIVEREGWAGFRAREAAALEAVTAPATVVATGGGIILAEQNRHFMRNNGIVIYLSAPVDVLVNRLEAEPEVGLRPTLTGKSLSEEVAEVLEQRDILYRETANIIVDATYEPGQVISEIRALLDQMALRNLGGAYT.

12–17 (GCGKTT) is an ATP binding site. Residues Thr16 and Asp32 each contribute to the Mg(2+) site. Residues Asp34, Arg58, and Gly79 each coordinate substrate. An LID domain region spans residues 112–126 (EAEPEVGLRPTLTGK). ATP is bound at residue Arg120. Residue Arg139 coordinates substrate.

This sequence belongs to the shikimate kinase family. AroL subfamily. As to quaternary structure, monomer. Mg(2+) is required as a cofactor.

It localises to the cytoplasm. The catalysed reaction is shikimate + ATP = 3-phosphoshikimate + ADP + H(+). It participates in metabolic intermediate biosynthesis; chorismate biosynthesis; chorismate from D-erythrose 4-phosphate and phosphoenolpyruvate: step 5/7. Catalyzes the specific phosphorylation of the 3-hydroxyl group of shikimic acid using ATP as a cosubstrate. The chain is Shikimate kinase 2 from Escherichia fergusonii (strain ATCC 35469 / DSM 13698 / CCUG 18766 / IAM 14443 / JCM 21226 / LMG 7866 / NBRC 102419 / NCTC 12128 / CDC 0568-73).